A 336-amino-acid chain; its full sequence is Methionyl-tRNA formyltransferase (336 aa).

110–113 contributes to the (6S)-5,6,7,8-tetrahydrofolate binding site; the sequence is SLLP.

Belongs to the Fmt family.

It carries out the reaction L-methionyl-tRNA(fMet) + (6R)-10-formyltetrahydrofolate = N-formyl-L-methionyl-tRNA(fMet) + (6S)-5,6,7,8-tetrahydrofolate + H(+). Functionally, attaches a formyl group to the free amino group of methionyl-tRNA(fMet). The formyl group appears to play a dual role in the initiator identity of N-formylmethionyl-tRNA by promoting its recognition by IF2 and preventing the misappropriation of this tRNA by the elongation apparatus. This is Methionyl-tRNA formyltransferase from Prochlorococcus marinus (strain NATL2A).